Consider the following 152-residue polypeptide: Lipoprotein signal peptidase (152 aa).

2 helical membrane passes run Asn55–Met75 and Leu85–Phe105. Active-site residues include Asp111 and Asp129. Residues Val124–Val144 traverse the membrane as a helical segment.

It belongs to the peptidase A8 family.

The protein resides in the cell membrane. The catalysed reaction is Release of signal peptides from bacterial membrane prolipoproteins. Hydrolyzes -Xaa-Yaa-Zaa-|-(S,diacylglyceryl)Cys-, in which Xaa is hydrophobic (preferably Leu), and Yaa (Ala or Ser) and Zaa (Gly or Ala) have small, neutral side chains.. The protein operates within protein modification; lipoprotein biosynthesis (signal peptide cleavage). Functionally, this protein specifically catalyzes the removal of signal peptides from prolipoproteins. This Bacillus mycoides (strain KBAB4) (Bacillus weihenstephanensis) protein is Lipoprotein signal peptidase.